Reading from the N-terminus, the 130-residue chain is MVMLDLLSNALIQIKNAEIMGKKQVVIWPVNKLIYHTLRVLQRYGYVGEIEYIDDGRGGKYVVQLLGKINDIGPIRPRYPVKYREIVQWEQKFLPARQIGILVISTSQGVMSHIEAKERKIGGVLLAYVY.

This sequence belongs to the universal ribosomal protein uS8 family. Part of the 30S ribosomal subunit.

In terms of biological role, one of the primary rRNA binding proteins, it binds directly to 16S rRNA central domain where it helps coordinate assembly of the platform of the 30S subunit. In Pyrobaculum islandicum (strain DSM 4184 / JCM 9189 / GEO3), this protein is Small ribosomal subunit protein uS8.